Reading from the N-terminus, the 447-residue chain is Kynureninase (447 aa).

Residues Leu106, Thr107, 134–137 (FPSD), Asp220, His223, and Tyr245 contribute to the pyridoxal 5'-phosphate site. N6-(pyridoxal phosphate)lysine is present on Lys246. 2 residues coordinate pyridoxal 5'-phosphate: Trp275 and Asn303.

The protein belongs to the kynureninase family. In terms of assembly, homodimer. Requires pyridoxal 5'-phosphate as cofactor.

The protein resides in the cytoplasm. The enzyme catalyses L-kynurenine + H2O = anthranilate + L-alanine + H(+). It carries out the reaction 3-hydroxy-L-kynurenine + H2O = 3-hydroxyanthranilate + L-alanine + H(+). The protein operates within amino-acid degradation; L-kynurenine degradation; L-alanine and anthranilate from L-kynurenine: step 1/1. It participates in cofactor biosynthesis; NAD(+) biosynthesis; quinolinate from L-kynurenine: step 2/3. Functionally, catalyzes the cleavage of L-kynurenine (L-Kyn) and L-3-hydroxykynurenine (L-3OHKyn) into anthranilic acid (AA) and 3-hydroxyanthranilic acid (3-OHAA), respectively. This chain is Kynureninase, found in Eremothecium gossypii (strain ATCC 10895 / CBS 109.51 / FGSC 9923 / NRRL Y-1056) (Yeast).